The chain runs to 473 residues: ATP synthase subunit beta (473 aa).

Residue 158–165 (GGAGVGKT) coordinates ATP.

It belongs to the ATPase alpha/beta chains family. In terms of assembly, F-type ATPases have 2 components, CF(1) - the catalytic core - and CF(0) - the membrane proton channel. CF(1) has five subunits: alpha(3), beta(3), gamma(1), delta(1), epsilon(1). CF(0) has three main subunits: a(1), b(2) and c(9-12). The alpha and beta chains form an alternating ring which encloses part of the gamma chain. CF(1) is attached to CF(0) by a central stalk formed by the gamma and epsilon chains, while a peripheral stalk is formed by the delta and b chains.

It localises to the cell membrane. The enzyme catalyses ATP + H2O + 4 H(+)(in) = ADP + phosphate + 5 H(+)(out). Functionally, produces ATP from ADP in the presence of a proton gradient across the membrane. The catalytic sites are hosted primarily by the beta subunits. The sequence is that of ATP synthase subunit beta from Geobacillus thermoleovorans (Bacillus thermoleovorans).